Consider the following 396-residue polypeptide: Elongation factor Tu 2 (396 aa).

A tr-type G domain is found at 10–206; the sequence is KPHINVGTIG…AMDAHIPQPE (197 aa). Positions 19 to 26 are G1; it reads GHVDHGKT. Residue 19 to 26 coordinates GTP; the sequence is GHVDHGKT. T26 provides a ligand contact to Mg(2+). A G2 region spans residues 60–64; that stretch reads GITIA. Residues 81 to 84 form a G3 region; that stretch reads DCPG. GTP contacts are provided by residues 81 to 85 and 136 to 139; these read DCPGH and NKAD. The interval 136–139 is G4; sequence NKAD. A G5 region spans residues 174–176; it reads SAL.

Belongs to the TRAFAC class translation factor GTPase superfamily. Classic translation factor GTPase family. EF-Tu/EF-1A subfamily. Monomer.

It is found in the cytoplasm. It carries out the reaction GTP + H2O = GDP + phosphate + H(+). Functionally, GTP hydrolase that promotes the GTP-dependent binding of aminoacyl-tRNA to the A-site of ribosomes during protein biosynthesis. This chain is Elongation factor Tu 2, found in Halorhodospira halophila (strain DSM 244 / SL1) (Ectothiorhodospira halophila (strain DSM 244 / SL1)).